A 30-amino-acid chain; its full sequence is Cycloviolacin-O7 (30 aa).

A cross-link (cyclopeptide (Ser-Asn)) is located at residues 1-30 (SIPCGESCVWIPCTITALAGCKCKSKVCYN). Cystine bridges form between C4-C21, C8-C23, and C13-C28.

Post-translationally, this is a cyclic peptide.

In terms of biological role, probably participates in a plant defense mechanism. This is Cycloviolacin-O7 from Viola odorata (Sweet violet).